The primary structure comprises 450 residues: UDP-N-acetylmuramoylalanine--D-glutamate ligase (450 aa).

Gly-119–Thr-125 provides a ligand contact to ATP.

It belongs to the MurCDEF family.

The protein resides in the cytoplasm. The enzyme catalyses UDP-N-acetyl-alpha-D-muramoyl-L-alanine + D-glutamate + ATP = UDP-N-acetyl-alpha-D-muramoyl-L-alanyl-D-glutamate + ADP + phosphate + H(+). It functions in the pathway cell wall biogenesis; peptidoglycan biosynthesis. Functionally, cell wall formation. Catalyzes the addition of glutamate to the nucleotide precursor UDP-N-acetylmuramoyl-L-alanine (UMA). In Bacillus cereus (strain Q1), this protein is UDP-N-acetylmuramoylalanine--D-glutamate ligase.